A 241-amino-acid polypeptide reads, in one-letter code: Small ribosomal subunit protein uS3 (241 aa).

Positions 22 to 91 (VDEYLAYKFH…NPQVTVVKVE (70 aa)) constitute a KH type-2 domain. The interval 218–241 (EMQQTQPEAPTLEETVEQSGGETQ) is disordered.

This sequence belongs to the universal ribosomal protein uS3 family. As to quaternary structure, part of the 30S ribosomal subunit.

In terms of biological role, binds the lower part of the 30S subunit head. The chain is Small ribosomal subunit protein uS3 from Ignicoccus hospitalis (strain KIN4/I / DSM 18386 / JCM 14125).